Consider the following 460-residue polypeptide: tRNA modification GTPase MnmE (460 aa).

Residues Arg-24, Glu-81, and Lys-121 each coordinate (6S)-5-formyl-5,6,7,8-tetrahydrofolate. The TrmE-type G domain occupies 218–384 (GLVVAIAGPP…MVEALAGFAA (167 aa)). GTP contacts are provided by residues 228-233 (NVGKST), 247-253 (SPHAGTT), and 272-275 (DTAG). Positions 232 and 253 each coordinate Mg(2+). (6S)-5-formyl-5,6,7,8-tetrahydrofolate is bound at residue Lys-460.

The protein belongs to the TRAFAC class TrmE-Era-EngA-EngB-Septin-like GTPase superfamily. TrmE GTPase family. In terms of assembly, homodimer. Heterotetramer of two MnmE and two MnmG subunits. K(+) is required as a cofactor.

It is found in the cytoplasm. In terms of biological role, exhibits a very high intrinsic GTPase hydrolysis rate. Involved in the addition of a carboxymethylaminomethyl (cmnm) group at the wobble position (U34) of certain tRNAs, forming tRNA-cmnm(5)s(2)U34. The sequence is that of tRNA modification GTPase MnmE from Rhodopseudomonas palustris (strain HaA2).